A 187-amino-acid polypeptide reads, in one-letter code: Prepronociceptin (187 aa).

Positions 1–19 (MKILFCDVLLLSLLSSVFS) are cleaved as a signal peptide. The propeptide occupies 20 to 95 (SCPRDCLTCQ…QPKASEMQHL (76 aa)). A run of 3 repeats spans residues 109-114 (DAEPGA), 115-120 (DAEPGA), and 121-126 (DAEPGA). The 3 X 6 AA tandem repeats of D-A-E-P-G-A stretch occupies residues 109–126 (DAEPGADAEPGADAEPGA). The segment at 109–133 (DAEPGADAEPGADAEPGADDAEEVE) is disordered. Residues 112–131 (PGADAEPGADAEPGADDAEE) are compositionally biased toward acidic residues. The propeptide occupies 180 to 187 (TLHQNGNV).

It belongs to the opioid neuropeptide precursor family. In terms of processing, specific enzymatic cleavages at paired basic residues probably yield other active peptides besides nociceptin. Post-translationally, the N-terminal domain contains 6 conserved cysteines thought to be involved in disulfide bonding and/or processing. Brain and spinal cord. Low levels in kidney and spleen.

Its subcellular location is the secreted. In terms of biological role, ligand of the opioid receptor-like receptor OPRL1. It may act as a transmitter in the brain by modulating nociceptive and locomotor behavior. May be involved in neuronal differentiation and development. When administered intracerebroventricularly, nociceptin induces hyperalgesia and decreases locomotor activity. Functionally, blocks nociceptin action in pain transmission by inhibiting nociceptin-induced hyperalgesia and allodynia. Has potent analgesic activity. The chain is Prepronociceptin (Pnoc) from Mus musculus (Mouse).